A 232-amino-acid chain; its full sequence is F420-dependent NADP reductase (232 aa).

NADP(+) contacts are provided by residues 15-18 (TGDQ), 37-38 (SR), K42, V80, V106, and A151.

This sequence belongs to the F420-dependent NADP reductase family. Homotetramer.

The catalysed reaction is reduced coenzyme F420-(gamma-L-Glu)(n) + NADP(+) = oxidized coenzyme F420-(gamma-L-Glu)(n) + NADPH + 2 H(+). In terms of biological role, catalyzes the reduction of NADP(+) with F420H(2) via hydride transfer, and likely the reverse reaction, i.e. the reduction of F420 with NADPH. Probably functions in the regeneration of NADPH required in biosynthetic reactions. Is specific for reduced F420 as electron donor for the reduction of NADP; neither reduced FAD nor FMN can act as electron donor. The enzyme is also specific for NADP; NAD is not utilized as substrate. In Methanothermobacter thermautotrophicus (strain ATCC 29096 / DSM 1053 / JCM 10044 / NBRC 100330 / Delta H) (Methanobacterium thermoautotrophicum), this protein is F420-dependent NADP reductase (fno).